Reading from the N-terminus, the 264-residue chain is Thiazole synthase (264 aa).

Catalysis depends on Lys106, which acts as the Schiff-base intermediate with DXP. 1-deoxy-D-xylulose 5-phosphate-binding positions include Gly167, 193-194 (AG), and 215-216 (NT).

This sequence belongs to the ThiG family. In terms of assembly, homotetramer. Forms heterodimers with either ThiH or ThiS.

Its subcellular location is the cytoplasm. The catalysed reaction is [ThiS sulfur-carrier protein]-C-terminal-Gly-aminoethanethioate + 2-iminoacetate + 1-deoxy-D-xylulose 5-phosphate = [ThiS sulfur-carrier protein]-C-terminal Gly-Gly + 2-[(2R,5Z)-2-carboxy-4-methylthiazol-5(2H)-ylidene]ethyl phosphate + 2 H2O + H(+). It participates in cofactor biosynthesis; thiamine diphosphate biosynthesis. Its function is as follows. Catalyzes the rearrangement of 1-deoxy-D-xylulose 5-phosphate (DXP) to produce the thiazole phosphate moiety of thiamine. Sulfur is provided by the thiocarboxylate moiety of the carrier protein ThiS. In vitro, sulfur can be provided by H(2)S. The chain is Thiazole synthase from Thioalkalivibrio sulfidiphilus (strain HL-EbGR7).